A 637-amino-acid polypeptide reads, in one-letter code: 1-deoxy-D-xylulose-5-phosphate synthase (637 aa).

Thiamine diphosphate is bound by residues His76 and 117–119 (GHS). Asp148 contacts Mg(2+). Residues 149–150 (GA), Asn177, Tyr294, and Glu381 each bind thiamine diphosphate. Asn177 is a binding site for Mg(2+).

This sequence belongs to the transketolase family. DXPS subfamily. In terms of assembly, homodimer. Requires Mg(2+) as cofactor. It depends on thiamine diphosphate as a cofactor.

It catalyses the reaction D-glyceraldehyde 3-phosphate + pyruvate + H(+) = 1-deoxy-D-xylulose 5-phosphate + CO2. Its pathway is metabolic intermediate biosynthesis; 1-deoxy-D-xylulose 5-phosphate biosynthesis; 1-deoxy-D-xylulose 5-phosphate from D-glyceraldehyde 3-phosphate and pyruvate: step 1/1. Its function is as follows. Catalyzes the acyloin condensation reaction between C atoms 2 and 3 of pyruvate and glyceraldehyde 3-phosphate to yield 1-deoxy-D-xylulose-5-phosphate (DXP). This Neisseria meningitidis serogroup C / serotype 2a (strain ATCC 700532 / DSM 15464 / FAM18) protein is 1-deoxy-D-xylulose-5-phosphate synthase.